The following is a 454-amino-acid chain: Dihydrolipoyllysine-residue succinyltransferase component of 2-oxoglutarate dehydrogenase complex, mitochondrial (454 aa).

The N-terminal 68 residues, 1 to 68 (MLSRSRCVSR…RFFQTTAVCK (68 aa)), are a transit peptide targeting the mitochondrion. Residues 71 to 145 (VITVQTPAFA…EGGTPLFTLR (75 aa)) enclose the Lipoyl-binding domain. S82 bears the Phosphoserine mark. K111 bears the N6-lipoyllysine mark. Residues 147–227 (TGAAPAKAKP…KGLRSEHREK (81 aa)) form a disordered region. The segment covering 149-163 (AAPAKAKPAETPAPA) has biased composition (low complexity). K155 bears the N6-acetyllysine mark. The segment covering 186-197 (PPVPSPSQPPSS) has biased composition (pro residues). The segment covering 198-217 (KPVSAIKPTAAPPLAEAGAA) has biased composition (low complexity). N6-acetyllysine occurs at positions 268, 273, 274, 278, and 308. Catalysis depends on residues H425 and D429.

It belongs to the 2-oxoacid dehydrogenase family. As to quaternary structure, the 2-oxoglutarate dehydrogenase complex is composed of OGDH (2-oxoglutarate dehydrogenase; E1), DLST (dihydrolipoamide succinyltransferase; E2), DLD (dihydrolipoamide dehydrogenase; E3) and the assembly factor KGD4. It contains multiple copies of the three enzymatic components (E1, E2 and E3). In the nucleus, the 2-oxoglutarate dehydrogenase complex associates with KAT2A. Interacts with ABHD11; this interaction maintains the functional lipoylation of the 2-oxoglutarate dehydrogenase complex. The cofactor is (R)-lipoate.

It is found in the mitochondrion matrix. The protein resides in the nucleus. It carries out the reaction N(6)-[(R)-dihydrolipoyl]-L-lysyl-[protein] + succinyl-CoA = N(6)-[(R)-S(8)-succinyldihydrolipoyl]-L-lysyl-[protein] + CoA. The protein operates within amino-acid degradation; L-lysine degradation via saccharopine pathway; glutaryl-CoA from L-lysine: step 6/6. Its pathway is carbohydrate metabolism; tricarboxylic acid cycle. Dihydrolipoamide succinyltransferase (E2) component of the 2-oxoglutarate dehydrogenase complex. The 2-oxoglutarate dehydrogenase complex catalyzes the overall conversion of 2-oxoglutarate to succinyl-CoA and CO(2). The 2-oxoglutarate dehydrogenase complex is mainly active in the mitochondrion. A fraction of the 2-oxoglutarate dehydrogenase complex also localizes in the nucleus and is required for lysine succinylation of histones: associates with KAT2A on chromatin and provides succinyl-CoA to histone succinyltransferase KAT2A. This Mus musculus (Mouse) protein is Dihydrolipoyllysine-residue succinyltransferase component of 2-oxoglutarate dehydrogenase complex, mitochondrial.